We begin with the raw amino-acid sequence, 427 residues long: MAENGDKEQLDLDTKICEQIEYYFGDHNLPRDKFLKQQVLLDNGWVPLETMIKFNRLSKLTTDFNIILQALKKSKTELLEINEEKCKIRRSPAKPLPELNEDYKNSFKHRSVYIKGFPTITNLDEIKEWLNDKGPIENIQMRRTLQREFKGSVFLVFNTEDGAKKFLEDKNLKYKDNDMIILSREEYFAKKNEERKLNKSEEKAKSKQEKEEAQKQAEDAERKLMEERVGCLLKFSGDLDNMTSREDLHALFQTHGEIEWIDFSRGAKEGIVLFKMNAKEALDKAKAANNDNLKLKGKNVKWELIEGDAEKEALKKIMEGKQESFNKRKGRDGRKFKGKGRGGKGNDSSPRKKIQFQGKKKTFDSSDDEDDMEESESPQKVTIKAKETAGPKNGASAAPGSPKKRALDDKAEDGPAVKQSKTEVGDQ.

The HTH La-type RNA-binding domain occupies 6–98; sequence DKEQLDLDTK…RRSPAKPLPE (93 aa). The region spanning 110–202 is the RRM domain; that stretch reads RSVYIKGFPT…EERKLNKSEE (93 aa). Disordered regions lie at residues 193–220 and 319–427; these read EERKLNKSEEKAKSKQEKEEAQKQAEDA and EGKQ…VGDQ. One can recognise a xRRM domain in the interval 226–348; that stretch reads EERVGCLLKF…KGRGGKGNDS (123 aa). The Nuclear localization signal signature appears at 315–331; that stretch reads KKIMEGKQESFNKRKGR. Basic residues-rich tracts occupy residues 327-342 and 351-360; these read KRKGRDGRKFKGKGRG and RKKIQFQGKK. Acidic residues predominate over residues 365–376; the sequence is SSDDEDDMEESE. The segment covering 405–427 has biased composition (basic and acidic residues); sequence RALDDKAEDGPAVKQSKTEVGDQ.

Phosphorylated.

It is found in the nucleus. Functionally, la protein plays a role in the transcription of RNA polymerase III. It is most probably a transcription termination factor. Binds to the 3' termini of virtually all nascent polymerase III transcripts. This chain is Lupus La protein homolog B (ssb-b), found in Xenopus laevis (African clawed frog).